The sequence spans 411 residues: Common plant regulatory factor 1 (411 aa).

The segment covering 1-14 (MGNTDDVKAVKPEK) has biased composition (basic and acidic residues). Disordered stretches follow at residues 1–30 (MGNT…SNSH), 130–197 (AMSI…SSVI), and 232–293 (SSLE…KQAE). Positions 148–164 (TLSQSKETEGSSDGSNE) are enriched in polar residues. Basic and acidic residues predominate over residues 235-244 (ELKDSPKEHA). Positions 249–259 (AGGQQPSTMMP) are enriched in polar residues. Over residues 264–293 (LHNDRDLKRERRKQSNRESARRSRLRKQAE) the composition is skewed to basic and acidic residues. A bZIP domain is found at 269–332 (DLKRERRKQS…EKLTNDNSRL (64 aa)). Residues 271–290 (KRERRKQSNRESARRSRLRK) are basic motif. The segment at 297 to 332 (LAIKVDSLTAENMALKAEINRLTLTAEKLTNDNSRL) is leucine-zipper. The disordered stretch occupies residues 346–411 (DVGLGNNNEK…NPRTDAVAAG (66 aa)).

The protein belongs to the bZIP family. In terms of assembly, binds DNA as a dimer.

It is found in the nucleus. Functionally, binds to the G-box-like motif (5'-ACGTGGC-3') of the chalcone synthase (CHS) gene promoter. G-box and G-box-like motifs are defined in promoters of certain plant genes which are regulated by such diverse stimuli as light-induction or hormone control. This Petroselinum crispum (Parsley) protein is Common plant regulatory factor 1 (CPRF1).